Consider the following 447-residue polypeptide: Diaminopimelate decarboxylase (447 aa).

The residue at position 72 (K72) is an N6-(pyridoxal phosphate)lysine. Pyridoxal 5'-phosphate contacts are provided by residues G258 and 300–303; that span reads EPGR. Substrate contacts are provided by R303, R344, and Y348. The active-site Proton donor is the C375. Substrate-binding residues include E376 and Y405. A pyridoxal 5'-phosphate-binding site is contributed by Y405.

Belongs to the Orn/Lys/Arg decarboxylase class-II family. LysA subfamily. As to quaternary structure, homodimer. Requires pyridoxal 5'-phosphate as cofactor.

It catalyses the reaction meso-2,6-diaminopimelate + H(+) = L-lysine + CO2. Its pathway is amino-acid biosynthesis; L-lysine biosynthesis via DAP pathway; L-lysine from DL-2,6-diaminopimelate: step 1/1. Specifically catalyzes the decarboxylation of meso-diaminopimelate (meso-DAP) to L-lysine. The sequence is that of Diaminopimelate decarboxylase from Mycobacterium bovis (strain ATCC BAA-935 / AF2122/97).